Reading from the N-terminus, the 20-residue chain is Snaclec ophioluxin subunit alpha (20 aa).

Cys4 and Cys15 are joined by a disulfide. The C-type lectin domain occupies 11–20 (YDQHCYRIIN).

The protein belongs to the snaclec family. In terms of assembly, heterodimer of subunits alpha and beta; disulfide-linked. As to expression, expressed by the venom gland.

Its subcellular location is the secreted. In terms of biological role, binds to the platelet and collagen receptor glycoprotein VI (GP6) and activates platelet aggregation. This Ophiophagus hannah (King cobra) protein is Snaclec ophioluxin subunit alpha.